A 354-amino-acid polypeptide reads, in one-letter code: Cellular communication network factor 6 (354 aa).

The first 23 residues, 1-23, serve as a signal peptide directing secretion; that stretch reads MRRLLFCTLLMTGLTQLCCRTQG. The IGFBP N-terminal domain occupies 44–117; it reads RTEVCRWPCR…RYETGVCAYL (74 aa). Disulfide bonds link Cys48–Cys72, Cys52–Cys74, Cys54–Cys75, Cys61–Cys78, Cys86–Cys100, Cys92–Cys114, Cys209–Cys238, Cys219–Cys223, Cys247–Cys252, Cys268–Cys305, Cys285–Cys319, Cys296–Cys335, and Cys299–Cys337. The TSP type-1 domain occupies 208–253; that stretch reads KCLVQATKWTPCSRTCGMGISNRVTNDNANCEMRKERRLCYIQPCS. The CTCK domain maps to 268 to 342; the sequence is CQPTFQLPKA…TSCVCQRDCR (75 aa). Asn308 carries N-linked (GlcNAc...) asparagine glycosylation.

Belongs to the CCN family.

It localises to the secreted. The protein resides in the mitochondrion. Plays a role in mitochondrial electron transport and mitochondrial respiration. This chain is Cellular communication network factor 6, found in Mus musculus (Mouse).